A 445-amino-acid chain; its full sequence is Disintegrin and metalloproteinase domain-containing protein 18 (445 aa).

Residues isoleucine 1–serine 106 enclose the Peptidase M12B domain. The Extracellular portion of the chain corresponds to isoleucine 1–serine 409. 3 disulfide bridges follow: cysteine 18-cysteine 101, cysteine 60-cysteine 85, and cysteine 62-cysteine 67. N-linked (GlcNAc...) asparagine glycosylation is found at asparagine 19 and asparagine 59. Asparagine 84 and asparagine 131 each carry an N-linked (GlcNAc...) asparagine glycan. The Disintegrin domain maps to glutamine 113–aspartate 202. Cysteine 173 and cysteine 194 form a disulfide bridge. N-linked (GlcNAc...) asparagine glycans are attached at residues asparagine 333 and asparagine 340. One can recognise an EGF-like domain in the interval threonine 342–asparagine 376. Cystine bridges form between cysteine 346–cysteine 358, cysteine 352–cysteine 364, and cysteine 366–cysteine 375. A helical transmembrane segment spans residues tryptophan 410–isoleucine 430. The Cytoplasmic segment spans residues lysine 431 to arginine 445.

The prodomain and the metalloprotease-like domain are cleaved during the epididymal maturation of the spermatozoa. In terms of tissue distribution, expressed specifically in testis.

Its subcellular location is the membrane. Sperm surface membrane protein that may be involved in spermatogenesis and fertilization. This is a non catalytic metalloprotease-like protein. The polypeptide is Disintegrin and metalloproteinase domain-containing protein 18 (Adam18) (Rattus norvegicus (Rat)).